Here is a 256-residue protein sequence, read N- to C-terminus: Pimeloyl-[acyl-carrier protein] methyl ester esterase (256 aa).

The region spanning 15 to 242 is the AB hydrolase-1 domain; the sequence is HLVLLHGWGL…AAHAPFISHP (228 aa). Residues W22, 82 to 83, and 143 to 147 contribute to the substrate site; these read SL and FLALQ. The Nucleophile role is filled by S82. Catalysis depends on residues D207 and H235. H235 serves as a coordination point for substrate.

The protein belongs to the AB hydrolase superfamily. Carboxylesterase BioH family. Monomer.

It localises to the cytoplasm. It catalyses the reaction 6-carboxyhexanoyl-[ACP] methyl ester + H2O = 6-carboxyhexanoyl-[ACP] + methanol + H(+). The protein operates within cofactor biosynthesis; biotin biosynthesis. Functionally, the physiological role of BioH is to remove the methyl group introduced by BioC when the pimeloyl moiety is complete. It allows to synthesize pimeloyl-ACP via the fatty acid synthetic pathway through the hydrolysis of the ester bonds of pimeloyl-ACP esters. The sequence is that of Pimeloyl-[acyl-carrier protein] methyl ester esterase from Escherichia coli O6:K15:H31 (strain 536 / UPEC).